The primary structure comprises 880 residues: Alanine--tRNA ligase (880 aa).

Zn(2+)-binding residues include His-558, His-562, Cys-663, and His-667.

This sequence belongs to the class-II aminoacyl-tRNA synthetase family. Zn(2+) is required as a cofactor.

It localises to the cytoplasm. It carries out the reaction tRNA(Ala) + L-alanine + ATP = L-alanyl-tRNA(Ala) + AMP + diphosphate. Catalyzes the attachment of alanine to tRNA(Ala) in a two-step reaction: alanine is first activated by ATP to form Ala-AMP and then transferred to the acceptor end of tRNA(Ala). Also edits incorrectly charged Ser-tRNA(Ala) and Gly-tRNA(Ala) via its editing domain. The protein is Alanine--tRNA ligase of Mycoplasmopsis agalactiae (strain NCTC 10123 / CIP 59.7 / PG2) (Mycoplasma agalactiae).